The following is a 513-amino-acid chain: ATP synthase subunit alpha (513 aa).

Residue 169-176 (GDRQTGKT) coordinates ATP.

This sequence belongs to the ATPase alpha/beta chains family. In terms of assembly, F-type ATPases have 2 components, CF(1) - the catalytic core - and CF(0) - the membrane proton channel. CF(1) has five subunits: alpha(3), beta(3), gamma(1), delta(1), epsilon(1). CF(0) has three main subunits: a(1), b(2) and c(9-12). The alpha and beta chains form an alternating ring which encloses part of the gamma chain. CF(1) is attached to CF(0) by a central stalk formed by the gamma and epsilon chains, while a peripheral stalk is formed by the delta and b chains.

It is found in the cell inner membrane. The catalysed reaction is ATP + H2O + 4 H(+)(in) = ADP + phosphate + 5 H(+)(out). Its function is as follows. Produces ATP from ADP in the presence of a proton gradient across the membrane. The alpha chain is a regulatory subunit. This Enterobacter sp. (strain 638) protein is ATP synthase subunit alpha.